The primary structure comprises 425 residues: GTPase Obg (425 aa).

In terms of domain architecture, Obg spans 1–158 (MFIDKARIFV…RWITLELKMI (158 aa)). In terms of domain architecture, OBG-type G spans 159–330 (ADVGLLGFPN…VIAYVSKMLK (172 aa)). Residues 165 to 172 (GFPNVGKS), 190 to 194 (FTTLT), 212 to 215 (DIPG), 282 to 285 (NKFD), and 311 to 313 (SAA) each bind GTP. Serine 172 and threonine 192 together coordinate Mg(2+). In terms of domain architecture, OCT spans 344 to 425 (YRPELDIGTE…IYELEFEFYN (82 aa)).

The protein belongs to the TRAFAC class OBG-HflX-like GTPase superfamily. OBG GTPase family. In terms of assembly, monomer. Requires Mg(2+) as cofactor.

Its subcellular location is the cytoplasm. Functionally, an essential GTPase which binds GTP, GDP and possibly (p)ppGpp with moderate affinity, with high nucleotide exchange rates and a fairly low GTP hydrolysis rate. Plays a role in control of the cell cycle, stress response, ribosome biogenesis and in those bacteria that undergo differentiation, in morphogenesis control. The protein is GTPase Obg of Clostridioides difficile (strain 630) (Peptoclostridium difficile).